The chain runs to 147 residues: Large ribosomal subunit protein bL9 (147 aa).

The protein belongs to the bacterial ribosomal protein bL9 family.

Binds to the 23S rRNA. This is Large ribosomal subunit protein bL9 from Mesoplasma florum (strain ATCC 33453 / NBRC 100688 / NCTC 11704 / L1) (Acholeplasma florum).